Reading from the N-terminus, the 207-residue chain is ATP-dependent Clp protease proteolytic subunit (207 aa).

Residue Ser111 is the Nucleophile of the active site. His136 is an active-site residue.

It belongs to the peptidase S14 family. As to quaternary structure, fourteen ClpP subunits assemble into 2 heptameric rings which stack back to back to give a disk-like structure with a central cavity, resembling the structure of eukaryotic proteasomes.

The protein resides in the cytoplasm. It catalyses the reaction Hydrolysis of proteins to small peptides in the presence of ATP and magnesium. alpha-casein is the usual test substrate. In the absence of ATP, only oligopeptides shorter than five residues are hydrolyzed (such as succinyl-Leu-Tyr-|-NHMec, and Leu-Tyr-Leu-|-Tyr-Trp, in which cleavage of the -Tyr-|-Leu- and -Tyr-|-Trp bonds also occurs).. Its function is as follows. Cleaves peptides in various proteins in a process that requires ATP hydrolysis. Has a chymotrypsin-like activity. Plays a major role in the degradation of misfolded proteins. The sequence is that of ATP-dependent Clp protease proteolytic subunit from Pectobacterium atrosepticum (strain SCRI 1043 / ATCC BAA-672) (Erwinia carotovora subsp. atroseptica).